The chain runs to 297 residues: Probable tyrosine phosphatase protein J2 (297 aa).

Residues 21–286 form the Tyrosine-protein phosphatase domain; it reads DSLSCIIQEY…VFCYHLIHAY (266 aa). The active-site Phosphocysteine intermediate is cysteine 227.

This sequence belongs to the protein-tyrosine phosphatase family.

It carries out the reaction O-phospho-L-tyrosyl-[protein] + H2O = L-tyrosyl-[protein] + phosphate. This Microplitis demolitor (Parasitoid wasp) protein is Probable tyrosine phosphatase protein J2 (J3).